Consider the following 488-residue polypeptide: Alkaline nuclease (488 aa).

This sequence belongs to the herpesviridae alkaline nuclease family. In terms of assembly, interacts with major DNA-binding protein; this interaction increases the nuclease processivity of the alkaline exonuclease.

It is found in the host nucleus. It localises to the host cytoplasm. In terms of biological role, plays a role in processing non linear or branched viral DNA intermediates in order to promote the production of mature packaged unit-length linear progeny viral DNA molecules. Exhibits endonuclease and exonuclease activities and accepts both double-stranded and single-stranded DNA as substrate. Exonuclease digestion of DNA is in the 5'-&gt; 3' direction and the products are 5'-monophosphate nucleosides. Additionally, forms a recombinase with the major DNA-binding protein, which displays strand exchange activity. The chain is Alkaline nuclease (U70) from Homo sapiens (Human).